The sequence spans 173 residues: Mesencephalic astrocyte-derived neurotrophic factor homolog (173 aa).

The first 22 residues, 1 to 22, serve as a signal peptide directing secretion; it reads MNTSHIVLMICFIVGVGQTALA. Disulfide bonds link cysteine 28–cysteine 114, cysteine 31–cysteine 103, cysteine 61–cysteine 72, and cysteine 148–cysteine 151.

It belongs to the ARMET family.

The protein localises to the secreted. In terms of biological role, required during the maturation of the embryonic nervous system for maintenance of neuronal and cuticular connectivity. Essential for maintenance of dopaminergic neurons and dopamine levels. The chain is Mesencephalic astrocyte-derived neurotrophic factor homolog from Drosophila virilis (Fruit fly).